The sequence spans 177 residues: Translation initiation factor IF-3 (177 aa).

The protein belongs to the IF-3 family. In terms of assembly, monomer.

The protein resides in the cytoplasm. Functionally, IF-3 binds to the 30S ribosomal subunit and shifts the equilibrium between 70S ribosomes and their 50S and 30S subunits in favor of the free subunits, thus enhancing the availability of 30S subunits on which protein synthesis initiation begins. In Nostoc punctiforme (strain ATCC 29133 / PCC 73102), this protein is Translation initiation factor IF-3.